Consider the following 109-residue polypeptide: Small ribosomal subunit protein bS20 (109 aa).

Belongs to the bacterial ribosomal protein bS20 family.

Functionally, binds directly to 16S ribosomal RNA. The protein is Small ribosomal subunit protein bS20 of Synechococcus sp. (strain JA-2-3B'a(2-13)) (Cyanobacteria bacterium Yellowstone B-Prime).